Reading from the N-terminus, the 54-residue chain is ATP synthase F(0) complex subunit 8 (54 aa).

A helical membrane pass occupies residues 9–25; sequence WVFLFFLVWLVLGFLGL.

The protein belongs to the ATPase protein 8 family. Component of the ATP synthase complex composed at least of ATP5F1A/subunit alpha, ATP5F1B/subunit beta, ATP5MC1/subunit c (homooctomer), MT-ATP6/subunit a, MT-ATP8/subunit 8, ATP5ME/subunit e, ATP5MF/subunit f, ATP5MG/subunit g, ATP5MK/subunit k, ATP5MJ/subunit j, ATP5F1C/subunit gamma, ATP5F1D/subunit delta, ATP5F1E/subunit epsilon, ATP5PF/subunit F6, ATP5PB/subunit b, ATP5PD/subunit d, ATP5PO/subunit OSCP. ATP synthase complex consists of a soluble F(1) head domain (subunits alpha(3) and beta(3)) - the catalytic core - and a membrane F(0) domain - the membrane proton channel (subunits c, a, 8, e, f, g, k and j). These two domains are linked by a central stalk (subunits gamma, delta, and epsilon) rotating inside the F1 region and a stationary peripheral stalk (subunits F6, b, d, and OSCP).

The protein resides in the mitochondrion membrane. Subunit 8, of the mitochondrial membrane ATP synthase complex (F(1)F(0) ATP synthase or Complex V) that produces ATP from ADP in the presence of a proton gradient across the membrane which is generated by electron transport complexes of the respiratory chain. ATP synthase complex consist of a soluble F(1) head domain - the catalytic core - and a membrane F(1) domain - the membrane proton channel. These two domains are linked by a central stalk rotating inside the F(1) region and a stationary peripheral stalk. During catalysis, ATP synthesis in the catalytic domain of F(1) is coupled via a rotary mechanism of the central stalk subunits to proton translocation. In vivo, can only synthesize ATP although its ATP hydrolase activity can be activated artificially in vitro. Part of the complex F(0) domain. The sequence is that of ATP synthase F(0) complex subunit 8 from Branchiostoma lanceolatum (Common lancelet).